The following is a 449-amino-acid chain: Biotin carboxylase (449 aa).

A Biotin carboxylation domain is found at 1–445 (MLDKIVIANR…NIHYLEKKLG (445 aa)). ATP-binding positions include Lys-116, Lys-159, 165–166 (GG), 201–204 (EKYL), His-209, and His-236. Positions 120–317 (IAAMKKAGVP…LIKEQLRIAA (198 aa)) constitute an ATP-grasp domain. Lys-238 is a hydrogencarbonate binding site. The ATP site is built by Glu-276 and Glu-288. Residues Glu-276, Glu-288, and Asn-290 each coordinate Mg(2+). 3 residues coordinate Mn(2+): Glu-276, Glu-288, and Asn-290. Residues Arg-292, Val-295, and Arg-338 each coordinate hydrogencarbonate. Arg-292 is an active-site residue. Residue Arg-338 coordinates biotin.

Acetyl-CoA carboxylase is a heterohexamer of biotin carboxyl carrier protein, biotin carboxylase and the two subunits of carboxyl transferase in a 2:2 complex. The cofactor is Mg(2+). Mn(2+) serves as cofactor.

It catalyses the reaction N(6)-biotinyl-L-lysyl-[protein] + hydrogencarbonate + ATP = N(6)-carboxybiotinyl-L-lysyl-[protein] + ADP + phosphate + H(+). It functions in the pathway lipid metabolism; malonyl-CoA biosynthesis; malonyl-CoA from acetyl-CoA: step 1/1. Functionally, this protein is a component of the acetyl coenzyme A carboxylase complex; first, biotin carboxylase catalyzes the carboxylation of the carrier protein and then the transcarboxylase transfers the carboxyl group to form malonyl-CoA. The polypeptide is Biotin carboxylase (accC) (Escherichia coli (strain K12)).